The sequence spans 366 residues: Homoserine O-acetyltransferase (366 aa).

Positions 47–349 (NAILICHALS…SGEGHDSFLL (303 aa)) constitute an AB hydrolase-1 domain. Serine 153 (nucleophile) is an active-site residue. Arginine 221 serves as a coordination point for substrate. Active-site residues include aspartate 311 and histidine 344. Aspartate 345 contributes to the substrate binding site.

Belongs to the AB hydrolase superfamily. MetX family. Homodimer.

It localises to the cytoplasm. It catalyses the reaction L-homoserine + acetyl-CoA = O-acetyl-L-homoserine + CoA. It participates in amino-acid biosynthesis; L-methionine biosynthesis via de novo pathway; O-acetyl-L-homoserine from L-homoserine: step 1/1. In terms of biological role, transfers an acetyl group from acetyl-CoA to L-homoserine, forming acetyl-L-homoserine. The sequence is that of Homoserine O-acetyltransferase from Leptospira interrogans serogroup Icterohaemorrhagiae serovar copenhageni (strain Fiocruz L1-130).